Consider the following 311-residue polypeptide: 4-hydroxy-tetrahydrodipicolinate synthase (311 aa).

T51 serves as a coordination point for pyruvate. The active-site Proton donor/acceptor is the Y140. Residue K168 is the Schiff-base intermediate with substrate of the active site. Residue I209 coordinates pyruvate.

It belongs to the DapA family. As to quaternary structure, homotetramer; dimer of dimers.

It localises to the cytoplasm. The catalysed reaction is L-aspartate 4-semialdehyde + pyruvate = (2S,4S)-4-hydroxy-2,3,4,5-tetrahydrodipicolinate + H2O + H(+). Its pathway is amino-acid biosynthesis; L-lysine biosynthesis via DAP pathway; (S)-tetrahydrodipicolinate from L-aspartate: step 3/4. In terms of biological role, catalyzes the condensation of (S)-aspartate-beta-semialdehyde [(S)-ASA] and pyruvate to 4-hydroxy-tetrahydrodipicolinate (HTPA). The sequence is that of 4-hydroxy-tetrahydrodipicolinate synthase from Streptococcus suis (strain 98HAH33).